Consider the following 2717-residue polypeptide: Naringenin synthase (2717 aa).

Residues 13-422 (HHAVESRDKV…VGRKKELIIR (410 aa)) are adenylation (A) domain. A Carrier 1 domain is found at 531 to 617 (AAVEALVLAE…AVRDYLFNRL (87 aa)). Residue S576 is modified to O-(pantetheine 4'-phosphoryl)serine. One can recognise a Ketosynthase family 3 (KS3) domain in the interval 638 to 1066 (AEPIAIISMA…GTNAHIILEQ (429 aa)). Catalysis depends on for beta-ketoacyl synthase activity residues C810, H945, and H988. Residues 1204 to 1462 (PIFSRAFKEA…GPSAVLSPHV (259 aa)) enclose the Malonyl-CoA:ACP transacylase (MAT) domain. Residues 1549–1688 (HGVLYRTTSI…GTLKLISLPP (140 aa)) form an N-terminal hotdog fold region. The PKS/mFAS DH domain maps to 1549–1847 (HGVLYRTTSI…LRAVQPPVVE (299 aa)). The tract at residues 1561–1842 (TNDIICAGFV…ISEVMLRAVQ (282 aa)) is dehydratase (DH) domain. Residue H1581 is the Proton acceptor; for dehydratase activity of the active site. The segment at 1703-1847 (NSEVDVSKAY…LRAVQPPVVE (145 aa)) is C-terminal hotdog fold. The active-site Proton donor; for dehydratase activity is the D1764. The 179-residue stretch at 2008 to 2186 (GTVLITGGTG…AVSLAWGPWA (179 aa)) folds into the Ketoreductase (KR) domain. The 78-residue stretch at 2277–2354 (SRSDTLLGLV…ALVQYLLDRI (78 aa)) folds into the Carrier 2 domain. At S2313 the chain carries O-(pantetheine 4'-phosphoryl)serine. The segment covering 2361 to 2373 (EIELDQDVAEEET) has biased composition (acidic residues). Residues 2361-2412 (EIELDQDVAEEETVSGTNGHQNGHQNGTQNGHSNGHANGASTNGDATDGIDP) form a disordered region. A compositionally biased stretch (low complexity) spans 2375 to 2396 (SGTNGHQNGHQNGTQNGHSNGH). The thioester reductase (TE) domain stretch occupies residues 2497-2711 (SLSVYSAVAA…AIAVEIEHWA (215 aa)).

It in the N-terminal section; belongs to the NRP synthetase family. The cofactor is pantetheine 4'-phosphate.

In terms of biological role, PKS-NRPS hybrid synthetase that, alone, is sufficient to produce naringenin chalcone, the direct precursor of naringenin, by using p-coumaric acid (p-CA) or p-hydroxybenzoic acid (p-HBA) with the involvement of malonyl-CoA molecules. The adenylation (A) domain activates p-CA or p-HBA as adenylates, which are transferred to the thiol group of the pantetheinyl residue of the T domain, and further transferred to the adjacent PKS portion of fnsA. Besides p-CA and p-HBA, the A domain is also able to activate other substrates such as cinnamic acid and salicyclic acid. Within the PKS portion of fnsA, p-CA and p-HBA act as starter units for respectively three or four malonyl-CoA molecules for elongation by the AT and KS domains of fnsA. Afterwards, naringenin chalcone is cyclized through Claisen condensation and thereby released either spontaneously or catalyzed by the TE domain. Finally, naringenin chalcone is converted to naringenin spontaneously or by a chalcone isomerase. The chain is Naringenin synthase from Pestalotiopsis fici (strain W106-1 / CGMCC3.15140).